The primary structure comprises 317 residues: Transaldolase 1 (317 aa).

Residue K132 is the Schiff-base intermediate with substrate of the active site.

It belongs to the transaldolase family. Type 1 subfamily. As to quaternary structure, homodimer.

The protein localises to the cytoplasm. The catalysed reaction is D-sedoheptulose 7-phosphate + D-glyceraldehyde 3-phosphate = D-erythrose 4-phosphate + beta-D-fructose 6-phosphate. It functions in the pathway carbohydrate degradation; pentose phosphate pathway; D-glyceraldehyde 3-phosphate and beta-D-fructose 6-phosphate from D-ribose 5-phosphate and D-xylulose 5-phosphate (non-oxidative stage): step 2/3. Functionally, transaldolase is important for the balance of metabolites in the pentose-phosphate pathway. The protein is Transaldolase 1 of Salmonella paratyphi A (strain ATCC 9150 / SARB42).